The chain runs to 185 residues: Urease accessory protein UreE (185 aa).

The interval 153–185 (LRANSAQGHGHSHSHSHDHHGYHHHGDGHWHKH) is disordered. Positions 162–175 (GHSHSHSHDHHGYH) are enriched in basic residues. Residues 176 to 185 (HHGDGHWHKH) show a composition bias toward basic and acidic residues.

The protein belongs to the UreE family.

Its subcellular location is the cytoplasm. Functionally, involved in urease metallocenter assembly. Binds nickel. Probably functions as a nickel donor during metallocenter assembly. This chain is Urease accessory protein UreE, found in Haemophilus influenzae (strain 86-028NP).